Here is a 587-residue protein sequence, read N- to C-terminus: ASI1-immunoprecipitated protein 3 (587 aa).

The disordered stretch occupies residues 1 to 118 (MVLSRRFAQV…NVTGKGKGKR (118 aa)). Over residues 66 to 98 (EDEDMAEGDDDQAEEETNPEAEEEEDEEEEEKP) the composition is skewed to acidic residues. The BAH domain maps to 129-248 (NTYDLEVPVL…TVEKKLWKLT (120 aa)). The 150-residue stretch at 344-493 (HRDKCLGKLL…RMQMTSVRCS (150 aa)) folds into the TFIIS central domain. Disordered regions lie at residues 371-396 (EAKV…GKDE) and 539-587 (TDKP…KKPE). Over residues 560–570 (ETNKPKDEALK) the composition is skewed to basic and acidic residues. Over residues 571–581 (TNDSNADNNPE) the composition is skewed to polar residues.

Interacts with MOM1. Component of the ASI1-AIPP1-EDM2 (AAE) RNA regulatory complex composed of at least AIPP1/EDM3, ASI1 and EDM2 and may contain CPL2, AIPP2 and AIPP3/BDT1. Part of the BAH-PHD bivalent histone reader complex that contains AIPP2, PAIPP2 and AIPP3/BDT1; the BAH-PHD module associates with CPL2 to form the BAH-PHD-CPL2 complex (BPC) for transcriptional repression. Binds directly to CPL2, PHD1, PAIPP2/PHD2, AIPP2/PHD3, PHD4, PHD5 and PHD6. Expressed ubiquitously.

Its subcellular location is the nucleus. Functionally, transcriptional repressor. Together with PHD finger-containing proteins (e.g. PHD1, PAIPP2/PHD2, AIPP2/PHD3, PHD4, PHD5 and PHD6), cooperates to form a BAH-PHD bivalent histone reader complex able to read histone H3 lysine 27 trimethylation (H3K27me3) and low-methylated H3K4 histone marks in order to regulate transcription, especially to prevent early flowering; H3K27me3 reader of this complex. CPL2 is subsequently recruited to form a BAH-PHD-CPL2 complex (BPC) in order to silence several H3K27me3 and low-methylated H3K4 enriched loci, including AGO5, via the phosphorylation state-dependent inhibition of Pol II release from the transcriptional start site (e.g. Ser5P-Pol II dephosphorylation). The BPC complex represses flowering by inhibiting the expression of several genes, including AGL6, FT, FUL and SOC1. Prevents the accumulation of intronic heterochromatin-containing genes (e.g. IBM1, At3g05410 and RPP7). Seems to not be involved in vernalization establishment, by contrast to orthologs in grass plants. The polypeptide is ASI1-immunoprecipitated protein 3 (Arabidopsis thaliana (Mouse-ear cress)).